The primary structure comprises 396 residues: Elongation factor Tu (396 aa).

One can recognise a tr-type G domain in the interval 10-205; the sequence is KTHANIGTIG…AVDDYIPTPE (196 aa). Residues 19-26 are G1; the sequence is GHVDHGKT. Position 19–26 (19–26) interacts with GTP; sequence GHVDHGKT. T26 provides a ligand contact to Mg(2+). A G2 region spans residues 61 to 65; that stretch reads GITIS. The interval 82–85 is G3; the sequence is DCPG. Residues 82 to 86 and 137 to 140 each bind GTP; these read DCPGH and NKCD. The G4 stretch occupies residues 137–140; the sequence is NKCD. A G5 region spans residues 175–177; sequence SAL.

It belongs to the TRAFAC class translation factor GTPase superfamily. Classic translation factor GTPase family. EF-Tu/EF-1A subfamily. Monomer.

Its subcellular location is the cytoplasm. The enzyme catalyses GTP + H2O = GDP + phosphate + H(+). In terms of biological role, GTP hydrolase that promotes the GTP-dependent binding of aminoacyl-tRNA to the A-site of ribosomes during protein biosynthesis. This is Elongation factor Tu from Halalkalibacterium halodurans (strain ATCC BAA-125 / DSM 18197 / FERM 7344 / JCM 9153 / C-125) (Bacillus halodurans).